The chain runs to 434 residues: Methylenetetrahydrofolate--tRNA-(uracil-5-)-methyltransferase TrmFO (434 aa).

9-14 provides a ligand contact to FAD; the sequence is GGGLAG.

It belongs to the MnmG family. TrmFO subfamily. It depends on FAD as a cofactor.

The protein localises to the cytoplasm. It carries out the reaction uridine(54) in tRNA + (6R)-5,10-methylene-5,6,7,8-tetrahydrofolate + NADH + H(+) = 5-methyluridine(54) in tRNA + (6S)-5,6,7,8-tetrahydrofolate + NAD(+). It catalyses the reaction uridine(54) in tRNA + (6R)-5,10-methylene-5,6,7,8-tetrahydrofolate + NADPH + H(+) = 5-methyluridine(54) in tRNA + (6S)-5,6,7,8-tetrahydrofolate + NADP(+). Functionally, catalyzes the folate-dependent formation of 5-methyl-uridine at position 54 (M-5-U54) in all tRNAs. This Geobacter sulfurreducens (strain ATCC 51573 / DSM 12127 / PCA) protein is Methylenetetrahydrofolate--tRNA-(uracil-5-)-methyltransferase TrmFO.